The following is a 538-amino-acid chain: Probable bifunctional riboflavin biosynthesis protein RIBA 1, chloroplastic (538 aa).

The span at 1-16 shows a compositional bias: polar residues; that stretch reads MSRLSSIYSQHRTSGL. The interval 1 to 29 is disordered; the sequence is MSRLSSIYSQHRTSGLRSDRSIMPNSTSN. A chloroplast-targeting transit peptide spans 1–73; it reads MSRLSSIYSQ…NGQASPSKVV (73 aa). A DHBP synthase region spans residues 46–311; it reads RNFHISHAVG…IADLIRYRRK (266 aa). D-ribulose 5-phosphate is bound by residues 134-135, aspartate 139, 249-253, and glutamate 273; these read RE and RAGHT. Residue glutamate 135 coordinates Mg(2+). A Mg(2+)-binding site is contributed by histidine 252. A GTP cyclohydrolase II region spans residues 312–530; that stretch reads RDRLVERVCV…DGGIKKEQDQ (219 aa). GTP is bound at residue 362–366; the sequence is RVHSE. Positions 367, 378, and 380 each coordinate Zn(2+). GTP is bound by residues glutamine 383, 406-408, and threonine 428; that span reads EGR. The active-site Proton acceptor; for GTP cyclohydrolase activity is aspartate 440. The active-site Nucleophile; for GTP cyclohydrolase activity is the arginine 442. Residues threonine 463 and lysine 468 each coordinate GTP. The disordered stretch occupies residues 506–538; that stretch reads HVYGTRPSGNTSTLADGGIKKEQDQIDSASEQE.

The protein in the N-terminal section; belongs to the DHBP synthase family. This sequence in the C-terminal section; belongs to the GTP cyclohydrolase II family. It depends on Mg(2+) as a cofactor. Mn(2+) serves as cofactor. The cofactor is Zn(2+).

The protein localises to the plastid. Its subcellular location is the chloroplast. It catalyses the reaction D-ribulose 5-phosphate = (2S)-2-hydroxy-3-oxobutyl phosphate + formate + H(+). The catalysed reaction is GTP + 4 H2O = 2,5-diamino-6-hydroxy-4-(5-phosphoribosylamino)-pyrimidine + formate + 2 phosphate + 3 H(+). Its pathway is cofactor biosynthesis; riboflavin biosynthesis; 2-hydroxy-3-oxobutyl phosphate from D-ribulose 5-phosphate: step 1/1. It participates in cofactor biosynthesis; riboflavin biosynthesis; 5-amino-6-(D-ribitylamino)uracil from GTP: step 1/4. In terms of biological role, involved in riboflavin biosynthesis. Catalyzes both the conversion of D-ribulose 5-phosphate to formate and 3,4-dihydroxy-2-butanone 4-phosphate and the conversion of GTP to 2,5-diamino-6-ribosylamino-4(3H)-pyrimidinone 5'-phosphate (DARP), formate and pyrophosphate. In Oryza sativa subsp. japonica (Rice), this protein is Probable bifunctional riboflavin biosynthesis protein RIBA 1, chloroplastic (RIBA1).